A 1487-amino-acid polypeptide reads, in one-letter code: Probable serine/threonine-protein kinase roco11 (1487 aa).

Residues 108 to 134 are disordered; it reads TQPSSSHNHSNHHHHHHQQQLQQQQQQ. A compositionally biased stretch (basic residues) spans 116–125; it reads HSNHHHHHHQ. LRR repeat units lie at residues 295–316, 318–340, and 341–362; these read NLAE…ICQL, HLKI…ANLT, and NLKY…IIEQ. The Roc domain occupies 379 to 564; it reads KSETWNKVKL…KILTNEAEKS (186 aa). Residues 379 to 564 are small GTPase-like; that stretch reads KSETWNKVKL…KILTNEAEKS (186 aa). GTP-binding positions include 392–399, 448–452, and 507–510; these read GQEGVGKS, DFGGQ, and THCD. Positions 678 to 872 constitute a COR domain; sequence VNQKYIDYND…KTYWANGILL (195 aa). Positions 891–1007 are disordered; that stretch reads SILPNNSSST…NNNNNNNNNI (117 aa). A compositionally biased stretch (low complexity) spans 897–931; the sequence is SSSTSSSTSSSTSSSTSSSSSSSTSSSSTSTTTTT. A compositionally biased stretch (polar residues) spans 932–950; it reads VQIQSSPFGNSTTIVNKLT. The segment covering 951–1007 has biased composition (low complexity); the sequence is NIDNNNNNNNNNNNNNNNNNNINNNNNNNNNNNNNNNNNNNNNNNNNNNNNNNNNNI. A Protein kinase domain is found at 1185–1452; the sequence is VVCEEQIGVG…YIVKELTNFY (268 aa). Residues 1191 to 1199 and lysine 1216 each bind ATP; that span reads IGVGGFGLV. The active-site Proton acceptor is the aspartate 1313. Residues 1464–1487 are disordered; the sequence is KSINDKSPHPDLISNGVPKLQIAK.

The protein belongs to the protein kinase superfamily. TKL Ser/Thr protein kinase family. ROCO subfamily.

The catalysed reaction is L-seryl-[protein] + ATP = O-phospho-L-seryl-[protein] + ADP + H(+). It carries out the reaction L-threonyl-[protein] + ATP = O-phospho-L-threonyl-[protein] + ADP + H(+). The protein is Probable serine/threonine-protein kinase roco11 (roco11) of Dictyostelium discoideum (Social amoeba).